Reading from the N-terminus, the 112-residue chain is uncharacterized protein (112 aa).

Positions 90–112 (KNFNNSKNDQIKKKKIDNNQVNL) are disordered.

This is an uncharacterized protein from Buchnera aphidicola subsp. Acyrthosiphon pisum (strain APS) (Acyrthosiphon pisum symbiotic bacterium).